A 70-amino-acid chain; its full sequence is Large ribosomal subunit protein eL43 (70 aa).

Positions 36, 39, 55, and 58 each coordinate Zn(2+). The segment at 36–58 adopts a C4-type zinc-finger fold; it reads CPYCKTTGKVIRLASGIWYCKKC.

Belongs to the eukaryotic ribosomal protein eL43 family. Putative zinc-binding subfamily. In terms of assembly, part of the 50S ribosomal subunit. It depends on Zn(2+) as a cofactor.

Functionally, binds to the 23S rRNA. In Saccharolobus solfataricus (strain ATCC 35092 / DSM 1617 / JCM 11322 / P2) (Sulfolobus solfataricus), this protein is Large ribosomal subunit protein eL43.